We begin with the raw amino-acid sequence, 70 residues long: Conotoxin Mr3.8 (70 aa).

An N-terminal signal peptide occupies residues 1–24 (MLKMGVVLFIFLVLFPLATLQLDA). Residues 25–54 (DQPVERYAKNKQLFNPHKRRGIILRAPGKR) constitute a propeptide that is removed on maturation. Disulfide bonds link Cys-55-Cys-67, Cys-56-Cys-68, and Cys-61-Cys-65.

Belongs to the conotoxin M superfamily. As to expression, expressed by the venom duct.

The protein resides in the secreted. Its function is as follows. In vitro, inhibits proliferation of the mice ovarian cancer cells ID8. The polypeptide is Conotoxin Mr3.8 (Conus marmoreus (Marble cone)).